The primary structure comprises 89 residues: Protein M7 (89 aa).

The first 25 residues, 1-25, serve as a signal peptide directing secretion; that stretch reads MAAMKSLATAILVVLLLRRLPRGLS. Disulfide bonds link cysteine 28–cysteine 65, cysteine 38–cysteine 54, cysteine 55–cysteine 80, and cysteine 67–cysteine 87.

This sequence belongs to the A9/FIL1 family. As to expression, tapetum of anthers.

It is found in the secreted. The polypeptide is Protein M7 (M7) (Lilium henryi (Henry's lily)).